We begin with the raw amino-acid sequence, 469 residues long: Cysteine--tRNA ligase (469 aa).

Cys-33 contributes to the Zn(2+) binding site. Residues 35–45 (ATVQGLPHIGH) carry the 'HIGH' region motif. Zn(2+) contacts are provided by Cys-211, His-236, and Glu-240. The 'KMSKS' region motif lies at 267–271 (KMSKS). Position 270 (Lys-270) interacts with ATP.

The protein belongs to the class-I aminoacyl-tRNA synthetase family. Monomer. It depends on Zn(2+) as a cofactor.

Its subcellular location is the cytoplasm. It catalyses the reaction tRNA(Cys) + L-cysteine + ATP = L-cysteinyl-tRNA(Cys) + AMP + diphosphate. The chain is Cysteine--tRNA ligase (cysS) from Mycobacterium bovis (strain ATCC BAA-935 / AF2122/97).